A 215-amino-acid polypeptide reads, in one-letter code: Protein-L-isoaspartate O-methyltransferase (215 aa).

Residue Ser62 is part of the active site.

The protein belongs to the methyltransferase superfamily. L-isoaspartyl/D-aspartyl protein methyltransferase family.

Its subcellular location is the cytoplasm. The catalysed reaction is [protein]-L-isoaspartate + S-adenosyl-L-methionine = [protein]-L-isoaspartate alpha-methyl ester + S-adenosyl-L-homocysteine. Functionally, catalyzes the methyl esterification of L-isoaspartyl residues in peptides and proteins that result from spontaneous decomposition of normal L-aspartyl and L-asparaginyl residues. It plays a role in the repair and/or degradation of damaged proteins. The polypeptide is Protein-L-isoaspartate O-methyltransferase (Ruegeria sp. (strain TM1040) (Silicibacter sp.)).